Reading from the N-terminus, the 209-residue chain is Ras-like protein (209 aa).

15 to 22 contributes to the GTP binding site; that stretch reads GGGGEGKS. An Effector region motif is present at residues 37–45; the sequence is YDPTIEESY. Residues 62–66 and 121–124 each bind GTP; these read DTAGQ and NKCD. 2 S-palmitoyl cysteine lipidation sites follow: C202 and C203. Cysteine methyl ester is present on C206. C206 is lipidated: S-geranylgeranyl cysteine. A propeptide spans 207-209 (removed in mature form); it reads IVM.

This sequence belongs to the small GTPase superfamily. Ras family.

The protein localises to the cell membrane. The catalysed reaction is GTP + H2O = GDP + phosphate + H(+). With respect to regulation, alternates between an inactive form bound to GDP and an active form bound to GTP. Activated by a guanine nucleotide-exchange factor (GEF) and inactivated by a GTPase-activating protein (GAP). This is Ras-like protein from Laccaria bicolor (Bicoloured deceiver).